We begin with the raw amino-acid sequence, 244 residues long: tRNA pseudouridine synthase A (244 aa).

Asp-52 acts as the Nucleophile in catalysis. Residue Tyr-110 coordinates substrate.

The protein belongs to the tRNA pseudouridine synthase TruA family. In terms of assembly, homodimer.

The catalysed reaction is uridine(38/39/40) in tRNA = pseudouridine(38/39/40) in tRNA. Formation of pseudouridine at positions 38, 39 and 40 in the anticodon stem and loop of transfer RNAs. The sequence is that of tRNA pseudouridine synthase A from Geotalea uraniireducens (strain Rf4) (Geobacter uraniireducens).